The following is a 194-amino-acid chain: dTTP/UTP pyrophosphatase (194 aa).

The Proton acceptor role is filled by aspartate 69.

This sequence belongs to the Maf family. YhdE subfamily. A divalent metal cation is required as a cofactor.

It is found in the cytoplasm. It carries out the reaction dTTP + H2O = dTMP + diphosphate + H(+). It catalyses the reaction UTP + H2O = UMP + diphosphate + H(+). Its function is as follows. Nucleoside triphosphate pyrophosphatase that hydrolyzes dTTP and UTP. May have a dual role in cell division arrest and in preventing the incorporation of modified nucleotides into cellular nucleic acids. This chain is dTTP/UTP pyrophosphatase, found in Symbiobacterium thermophilum (strain DSM 24528 / JCM 14929 / IAM 14863 / T).